A 179-amino-acid polypeptide reads, in one-letter code: CASP-like protein 1F1 (179 aa).

The Cytoplasmic portion of the chain corresponds to 1–16; that stretch reads MENVEDKYNSPLKSQK. The helical transmembrane segment at 17–37 threads the bilayer; sequence LFIGAQICLRIVTIGATLAAT. Residues 38–65 lie on the Extracellular side of the membrane; the sequence is WIMVTDKQSITFGDFVMVAKYNYSSAFK. N-linked (GlcNAc...) asparagine glycosylation occurs at Asn-59. The chain crosses the membrane as a helical span at residues 66–86; sequence FFVLANVIACACSVVSLLFLC. The Cytoplasmic portion of the chain corresponds to 87-105; it reads ALGRYSSNPGHVFLLFLHD. A helical transmembrane segment spans residues 106-126; sequence LLMMSLVLAGCSAATAIGFLG. Residues 127–150 are Extracellular-facing; the sequence is KYGNTKSGWMPICDQFGQFCNRGT. The chain crosses the membrane as a helical span at residues 151-171; it reads ISMMLSYLSMVCLLILTVTSA. The Cytoplasmic portion of the chain corresponds to 172–179; sequence NKSRQIHV.

Belongs to the Casparian strip membrane proteins (CASP) family. Homodimer and heterodimers.

Its subcellular location is the cell membrane. The protein is CASP-like protein 1F1 of Ricinus communis (Castor bean).